Here is a 331-residue protein sequence, read N- to C-terminus: Nucleotide-binding protein SGR_5570 (331 aa).

The tract at residues 1 to 43 (MTENTHETAPNTADTDTADFDTADTDRADGAADVSTNTPNETG) is disordered. 55-62 (GMSGAGRS) is an ATP binding site. 106–109 (DVRG) is a GTP binding site.

The protein belongs to the RapZ-like family.

Its function is as follows. Displays ATPase and GTPase activities. This is Nucleotide-binding protein SGR_5570 from Streptomyces griseus subsp. griseus (strain JCM 4626 / CBS 651.72 / NBRC 13350 / KCC S-0626 / ISP 5235).